The sequence spans 1427 residues: DNA-directed RNA polymerase subunit beta' (1427 aa).

Zn(2+) is bound by residues C70, C72, C85, and C88. Positions 461, 463, and 465 each coordinate Mg(2+). Zn(2+)-binding residues include C810, C884, C891, and C894. Disordered regions lie at residues 1044–1065 (QTDE…AGRG) and 1394–1427 (PEAA…GDEA).

The protein belongs to the RNA polymerase beta' chain family. The RNAP catalytic core consists of 2 alpha, 1 beta, 1 beta' and 1 omega subunit. When a sigma factor is associated with the core the holoenzyme is formed, which can initiate transcription. The cofactor is Mg(2+). Requires Zn(2+) as cofactor.

The catalysed reaction is RNA(n) + a ribonucleoside 5'-triphosphate = RNA(n+1) + diphosphate. Functionally, DNA-dependent RNA polymerase catalyzes the transcription of DNA into RNA using the four ribonucleoside triphosphates as substrates. In Novosphingobium aromaticivorans (strain ATCC 700278 / DSM 12444 / CCUG 56034 / CIP 105152 / NBRC 16084 / F199), this protein is DNA-directed RNA polymerase subunit beta'.